The chain runs to 325 residues: Eukaryotic translation initiation factor 3 subunit I (325 aa).

WD repeat units follow at residues 8–47 (GHER…RLGT), 50–91 (GHTG…ALLK), 144–183 (CNDS…VLVN), and 186–225 (EHSR…HQKT). Position 219 is a phosphothreonine (threonine 219). N6-acetyllysine is present on lysine 264. A Glycyl lysine isopeptide (Lys-Gly) (interchain with G-Cter in ubiquitin) cross-link involves residue lysine 282. One copy of the WD 5 repeat lies at 283–324 (GHFGPINSVAFHPDGKSYSSGGEDGYVRIHYFDPQYFEFEFE). At tyrosine 308 the chain carries Phosphotyrosine.

Belongs to the eIF-3 subunit I family. As to quaternary structure, component of the eukaryotic translation initiation factor 3 (eIF-3) complex, which is composed of 13 subunits: EIF3A, EIF3B, EIF3C, EIF3D, EIF3E, EIF3F, EIF3G, EIF3H, EIF3I, EIF3J, EIF3K, EIF3L and EIF3M. The eIF-3 complex appears to include 3 stable modules: module A is composed of EIF3A, EIF3B, EIF3G and EIF3I; module B is composed of EIF3F, EIF3H, and EIF3M; and module C is composed of EIF3C, EIF3D, EIF3E, EIF3K and EIF3L. EIF3C of module C binds EIF3B of module A and EIF3H of module B, thereby linking the three modules. EIF3J is a labile subunit that binds to the eIF-3 complex via EIF3B. The eIF-3 complex interacts with RPS6KB1 under conditions of nutrient depletion. Mitogenic stimulation leads to binding and activation of a complex composed of MTOR and RPTOR, leading to phosphorylation and release of RPS6KB1 and binding of EIF4B to eIF-3. In terms of processing, phosphorylated by TGF-beta type II receptor.

Its subcellular location is the cytoplasm. In terms of biological role, component of the eukaryotic translation initiation factor 3 (eIF-3) complex, which is required for several steps in the initiation of protein synthesis. The eIF-3 complex associates with the 40S ribosome and facilitates the recruitment of eIF-1, eIF-1A, eIF-2:GTP:methionyl-tRNAi and eIF-5 to form the 43S pre-initiation complex (43S PIC). The eIF-3 complex stimulates mRNA recruitment to the 43S PIC and scanning of the mRNA for AUG recognition. The eIF-3 complex is also required for disassembly and recycling of post-termination ribosomal complexes and subsequently prevents premature joining of the 40S and 60S ribosomal subunits prior to initiation. The eIF-3 complex specifically targets and initiates translation of a subset of mRNAs involved in cell proliferation, including cell cycling, differentiation and apoptosis, and uses different modes of RNA stem-loop binding to exert either translational activation or repression. The protein is Eukaryotic translation initiation factor 3 subunit I of Bos taurus (Bovine).